A 134-amino-acid polypeptide reads, in one-letter code: UPF0412 protein YaaI (134 aa).

The first 23 residues, 1–23 (MRSVLTISVGLLFGLALSSVAHA), serve as a signal peptide directing secretion.

The protein belongs to the UPF0412 family.

The polypeptide is UPF0412 protein YaaI (Salmonella typhimurium (strain LT2 / SGSC1412 / ATCC 700720)).